The chain runs to 292 residues: Protein CHLOROPLAST ENHANCING STRESS TOLERANCE, chloroplastic (292 aa).

Pro residues predominate over residues 1-15 (MALLSPPSPPPPLPP). The transit peptide at 1-67 (MALLSPPSPP…RSSRRRRRVA (67 aa)) directs the protein to the chloroplast. Disordered stretches follow at residues 1–119 (MALL…DLED) and 206–225 (MEAPKKKSKPGKSVYAKATD). Composition is skewed to low complexity over residues 49 to 58 (STANARAYSR) and 94 to 107 (ASSDGAAGDIASSA). A helical membrane pass occupies residues 267–287 (ALYLLTAFPVIIGISVVLILF).

The protein belongs to the Y3IP1/CEST family.

It is found in the plastid. The protein resides in the chloroplast thylakoid membrane. Involved in light-induced chloroplast development and growth. Involved in the plant response to abiotic and photooxidative stresses. May be involved in the suppression of photooxidative damage. This is Protein CHLOROPLAST ENHANCING STRESS TOLERANCE, chloroplastic from Oryza sativa subsp. indica (Rice).